We begin with the raw amino-acid sequence, 220 residues long: Ribosome maturation factor RimP (220 aa).

Residues 1–15 (MSQRGRATRPTGPTG) are compositionally biased toward low complexity. Disordered stretches follow at residues 1–35 (MSQRGRATRPTGPTGRPRRTGGQRSAGRVSRGGDL) and 184–220 (PGRVQVEFTRPGETDGADGADEAGDFDDDDDVEGEER). Over residues 198 to 220 (DGADGADEAGDFDDDDDVEGEER) the composition is skewed to acidic residues.

Belongs to the RimP family.

It localises to the cytoplasm. In terms of biological role, required for maturation of 30S ribosomal subunits. The sequence is that of Ribosome maturation factor RimP from Salinispora tropica (strain ATCC BAA-916 / DSM 44818 / JCM 13857 / NBRC 105044 / CNB-440).